The primary structure comprises 363 residues: UDP-N-acetylglucosamine--N-acetylmuramyl-(pentapeptide) pyrophosphoryl-undecaprenol N-acetylglucosamine transferase (363 aa).

UDP-N-acetyl-alpha-D-glucosamine contacts are provided by residues 14–16 (TGG), arginine 171, serine 200, and glutamine 290.

Belongs to the glycosyltransferase 28 family. MurG subfamily.

The protein resides in the cell inner membrane. It catalyses the reaction di-trans,octa-cis-undecaprenyl diphospho-N-acetyl-alpha-D-muramoyl-L-alanyl-D-glutamyl-meso-2,6-diaminopimeloyl-D-alanyl-D-alanine + UDP-N-acetyl-alpha-D-glucosamine = di-trans,octa-cis-undecaprenyl diphospho-[N-acetyl-alpha-D-glucosaminyl-(1-&gt;4)]-N-acetyl-alpha-D-muramoyl-L-alanyl-D-glutamyl-meso-2,6-diaminopimeloyl-D-alanyl-D-alanine + UDP + H(+). Its pathway is cell wall biogenesis; peptidoglycan biosynthesis. In terms of biological role, cell wall formation. Catalyzes the transfer of a GlcNAc subunit on undecaprenyl-pyrophosphoryl-MurNAc-pentapeptide (lipid intermediate I) to form undecaprenyl-pyrophosphoryl-MurNAc-(pentapeptide)GlcNAc (lipid intermediate II). This is UDP-N-acetylglucosamine--N-acetylmuramyl-(pentapeptide) pyrophosphoryl-undecaprenol N-acetylglucosamine transferase from Borreliella burgdorferi (strain ATCC 35210 / DSM 4680 / CIP 102532 / B31) (Borrelia burgdorferi).